We begin with the raw amino-acid sequence, 515 residues long: Cytochrome P450 monooxygenase nsrP (515 aa).

A helical membrane pass occupies residues 20–40 (FGTAAFLAVLLSALAFLSYTP). 3 N-linked (GlcNAc...) asparagine glycosylation sites follow: Asn84, Asn406, and Asn411. Cys452 contacts heme.

It belongs to the cytochrome P450 family. Heme serves as cofactor.

It localises to the membrane. It functions in the pathway secondary metabolite biosynthesis. In terms of biological role, cytochrome P450 monooxygenase; part of the gene cluster that mediates the biosynthesis of the tetrahydroxanthone dimer neosartorin, which exhibits antibacterial activity. The two different monomeric units appear to be synthesized by the same set of enzymes, among which the Baeyer-Villiger monooxygenase nsrF is the key enzyme for the divergence of the biosynthetic routes. The pathway begins with the synthesis of atrochrysone thioester by the polyketide synthase nsrB. The atrochrysone carboxyl ACP thioesterase nsrC then breaks the thioester bond and releases the atrochrysone carboxylic acid from AacuL. Atrochrysone carboxylic acid is decarboxylated by the decarboxylase nsrE, and oxidized by the anthrone oxygenase nsrD to yield emodin. Emodin is then reduced to emodin hydroquinone by the oxidoreductase nsrR. A-ring reduction by the short chain dehydrogenase nsrJ, dehydration by the scytalone dehydratase-like protein nsrI and probable spontaneous re-oxidation, results in overall deoxygenation to chrysophanol. The Baeyer-Villiger monooxygenase nsrF accepts chrysophanol as a substrate to insert one oxygen atom at two different positions to yield the precursors of both monomric units. NsrF is promiscuous/flexible in interacting with the 2 (non methylated and methylated) aromatic rings of chrysophanol, thus diverging the biosynthetic pathway at this point. After the hydrolysis of the lactones, methylesterification by the methyltransferase nsrG yields respectively moniliphenone and 2,2',6'-trihydroxy-4-methyl-6-methoxya-cyldiphenylmethanone. The next steps are the hydroxylation by the FAD-dependent monooxygenase nsrK, followed by isomerization by the monooxygenase nsrQ. The short chain dehydrogenase/reductase nsrO then catalyzes the C-5 ketoreduction to give the xanthone skeleton of blennolide C and 5-acetylblennolide A. The acetyltransferase nsrL has a strict substrate specificity and uses only blennolide A but not blennolide C to yield 5-acetylblennolide A as the single-acetylated product. In the final step of the biosynthesis, the heterodimerization of the 2 xanthones, blennolide C and 5-acetylblennolide A, is catalyzed by the cytochrome P450 monooxygenase nsrP. NsrP can utilize at least three different xanthones as its substrates to perform the dimerization reaction. The protein is Cytochrome P450 monooxygenase nsrP of Aspergillus novofumigatus (strain IBT 16806).